Consider the following 448-residue polypeptide: Phosphoglucosamine mutase (448 aa).

Ser100 serves as the catalytic Phosphoserine intermediate. Mg(2+) contacts are provided by Ser100, Asp240, Asp242, and Asp244. Ser100 is modified (phosphoserine).

This sequence belongs to the phosphohexose mutase family. Mg(2+) serves as cofactor. In terms of processing, activated by phosphorylation.

The catalysed reaction is alpha-D-glucosamine 1-phosphate = D-glucosamine 6-phosphate. Catalyzes the conversion of glucosamine-6-phosphate to glucosamine-1-phosphate. The chain is Phosphoglucosamine mutase from Bacillus mycoides (strain KBAB4) (Bacillus weihenstephanensis).